The following is a 180-amino-acid chain: NADH-quinone oxidoreductase subunit I (180 aa).

2 4Fe-4S ferredoxin-type domains span residues 48–80 (IVLT…LQKA) and 90–119 (EFFR…LTPD). Cysteine 60, cysteine 63, cysteine 66, cysteine 70, cysteine 99, cysteine 102, cysteine 105, and cysteine 109 together coordinate [4Fe-4S] cluster.

It belongs to the complex I 23 kDa subunit family. As to quaternary structure, NDH-1 is composed of 13 different subunits. Subunits NuoA, H, J, K, L, M, N constitute the membrane sector of the complex. The cofactor is [4Fe-4S] cluster.

Its subcellular location is the cell inner membrane. The catalysed reaction is a quinone + NADH + 5 H(+)(in) = a quinol + NAD(+) + 4 H(+)(out). NDH-1 shuttles electrons from NADH, via FMN and iron-sulfur (Fe-S) centers, to quinones in the respiratory chain. The immediate electron acceptor for the enzyme in this species is believed to be ubiquinone. Couples the redox reaction to proton translocation (for every two electrons transferred, four hydrogen ions are translocated across the cytoplasmic membrane), and thus conserves the redox energy in a proton gradient. In Edwardsiella ictaluri (strain 93-146), this protein is NADH-quinone oxidoreductase subunit I.